Reading from the N-terminus, the 167-residue chain is NAD(P)H-quinone oxidoreductase subunit J (167 aa).

This sequence belongs to the complex I 30 kDa subunit family. As to quaternary structure, NDH-1 can be composed of about 15 different subunits; different subcomplexes with different compositions have been identified which probably have different functions.

The protein resides in the cellular thylakoid membrane. It carries out the reaction a plastoquinone + NADH + (n+1) H(+)(in) = a plastoquinol + NAD(+) + n H(+)(out). It catalyses the reaction a plastoquinone + NADPH + (n+1) H(+)(in) = a plastoquinol + NADP(+) + n H(+)(out). NDH-1 shuttles electrons from an unknown electron donor, via FMN and iron-sulfur (Fe-S) centers, to quinones in the respiratory and/or the photosynthetic chain. The immediate electron acceptor for the enzyme in this species is believed to be plastoquinone. Couples the redox reaction to proton translocation, and thus conserves the redox energy in a proton gradient. Cyanobacterial NDH-1 also plays a role in inorganic carbon-concentration. The protein is NAD(P)H-quinone oxidoreductase subunit J of Microcystis aeruginosa (strain NIES-843 / IAM M-2473).